The chain runs to 453 residues: Ribulose bisphosphate carboxylase large chain (453 aa).

The propeptide occupies 1–2 (MS). An N-acetylproline modification is found at proline 3. Position 14 is an N6,N6,N6-trimethyllysine (lysine 14). Substrate-binding residues include asparagine 123 and threonine 173. The Proton acceptor role is filled by lysine 175. Substrate is bound at residue lysine 177. Residues lysine 201, aspartate 203, and glutamate 204 each contribute to the Mg(2+) site. The residue at position 201 (lysine 201) is an N6-carboxylysine. Residue histidine 294 is the Proton acceptor of the active site. Substrate contacts are provided by arginine 295, histidine 327, and serine 379.

This sequence belongs to the RuBisCO large chain family. Type I subfamily. Heterohexadecamer of 8 large chains and 8 small chains; disulfide-linked. The disulfide link is formed within the large subunit homodimers. It depends on Mg(2+) as a cofactor. Post-translationally, the disulfide bond which can form in the large chain dimeric partners within the hexadecamer appears to be associated with oxidative stress and protein turnover.

The protein resides in the plastid. It is found in the chloroplast. It carries out the reaction 2 (2R)-3-phosphoglycerate + 2 H(+) = D-ribulose 1,5-bisphosphate + CO2 + H2O. The catalysed reaction is D-ribulose 1,5-bisphosphate + O2 = 2-phosphoglycolate + (2R)-3-phosphoglycerate + 2 H(+). In terms of biological role, ruBisCO catalyzes two reactions: the carboxylation of D-ribulose 1,5-bisphosphate, the primary event in carbon dioxide fixation, as well as the oxidative fragmentation of the pentose substrate in the photorespiration process. Both reactions occur simultaneously and in competition at the same active site. In Galium album (White bedstraw), this protein is Ribulose bisphosphate carboxylase large chain.